The sequence spans 262 residues: Abhydrolase domain-containing protein AFT2-1 (262 aa).

The Peroxisomal targeting signal type 1 signature appears at 260–262 (SKL).

This sequence belongs to the AB hydrolase superfamily. AKT2 hydrolase family.

It is found in the peroxisome. Its pathway is mycotoxin biosynthesis. Its function is as follows. Abhydrolase domain-containing protein; part of the gene clusters that mediate the biosynthesis of the host-selective toxins (HSTs) AF-toxins responsible for Alternaria black spot of strawberry disease by the strawberry pathotype. AF-toxin I and III are valine derivatives of 2,3-dyhydroxy-isovaleric acid and 2-hydroxy-isovaleric acid respectively, while AF II is an isoleucine derivative of 2-hydroxy-valeric acid. These derivatives are bound to a 9,10-epoxy-8-hydroxy-9-methyl-decatrienoic acid (EDA) moiety. On cellular level, AF-toxins affect plasma membrane of susceptible cells and cause a sudden increase in loss of K(+) after a few minutes of toxin treatment. The aldo-keto reductase AFTS1 catalyzes the conversion of 2-keto-isovaleric acid (2-KIV) to 2-hydroxy-isovaleric acid (2-HIV) by reduction of its ketone to an alcohol. The acyl-CoA ligase AFT1, the hydrolase AFT2 and the enoyl-CoA hydratases AFT3 and AFT6, but also the polyketide synthase AFT9, the acyl-CoA dehydrogenase AFT10, the cytochrome P450 monooxygenase AFT11 and the oxidoreductase AFT12 are all involved in the biosynthesis of the AK-, AF- and ACT-toxin common EDA structural moiety. The exact function of each enzyme, and of additional enzymes identified within the AF-toxin clusters have still to be determined. In Alternaria alternata (Alternaria rot fungus), this protein is Abhydrolase domain-containing protein AFT2-1.